The sequence spans 72 residues: Translation initiation factor IF-1 (72 aa).

The 72-residue stretch at 1–72 (MSKDDVIQMQ…SRARIVFRAK (72 aa)) folds into the S1-like domain.

It belongs to the IF-1 family. Component of the 30S ribosomal translation pre-initiation complex which assembles on the 30S ribosome in the order IF-2 and IF-3, IF-1 and N-formylmethionyl-tRNA(fMet); mRNA recruitment can occur at any time during PIC assembly.

The protein localises to the cytoplasm. In terms of biological role, one of the essential components for the initiation of protein synthesis. Stabilizes the binding of IF-2 and IF-3 on the 30S subunit to which N-formylmethionyl-tRNA(fMet) subsequently binds. Helps modulate mRNA selection, yielding the 30S pre-initiation complex (PIC). Upon addition of the 50S ribosomal subunit IF-1, IF-2 and IF-3 are released leaving the mature 70S translation initiation complex. This chain is Translation initiation factor IF-1, found in Methylibium petroleiphilum (strain ATCC BAA-1232 / LMG 22953 / PM1).